The chain runs to 179 residues: Small ribosomal subunit protein uS5 (179 aa).

Residues 22 to 85 (MIEKLVAVNR…EYARKRMSNV (64 aa)) enclose the S5 DRBM domain.

It belongs to the universal ribosomal protein uS5 family. Part of the 30S ribosomal subunit. Contacts proteins S4 and S8.

In terms of biological role, with S4 and S12 plays an important role in translational accuracy. Its function is as follows. Located at the back of the 30S subunit body where it stabilizes the conformation of the head with respect to the body. In Xylella fastidiosa (strain M23), this protein is Small ribosomal subunit protein uS5.